A 307-amino-acid chain; its full sequence is Acetyl-coenzyme A carboxylase carboxyl transferase subunit beta (307 aa).

Residues 28 to 297 (LWVKCPDTGQ…TPEPGTAPEP (270 aa)) enclose the CoA carboxyltransferase N-terminal domain. The tract at residues 286–307 (RRTPEPGTAPEPTTPEPLPNAA) is disordered. The span at 292–307 (GTAPEPTTPEPLPNAA) shows a compositional bias: pro residues.

The protein belongs to the AccD/PCCB family. Acetyl-CoA carboxylase is a heterohexamer composed of biotin carboxyl carrier protein (AccB), biotin carboxylase (AccC) and two subunits each of ACCase subunit alpha (AccA) and ACCase subunit beta (AccD).

It localises to the cytoplasm. The enzyme catalyses N(6)-carboxybiotinyl-L-lysyl-[protein] + acetyl-CoA = N(6)-biotinyl-L-lysyl-[protein] + malonyl-CoA. Its pathway is lipid metabolism; malonyl-CoA biosynthesis; malonyl-CoA from acetyl-CoA: step 1/1. In terms of biological role, component of the acetyl coenzyme A carboxylase (ACC) complex. Biotin carboxylase (BC) catalyzes the carboxylation of biotin on its carrier protein (BCCP) and then the CO(2) group is transferred by the transcarboxylase to acetyl-CoA to form malonyl-CoA. The protein is Acetyl-coenzyme A carboxylase carboxyl transferase subunit beta of Methylorubrum extorquens (strain ATCC 14718 / DSM 1338 / JCM 2805 / NCIMB 9133 / AM1) (Methylobacterium extorquens).